Consider the following 220-residue polypeptide: UPF0758 protein ASA_4229 (220 aa).

Residues 95 to 220 (EQLQRGDALT…TVSFAERGWL (126 aa)) form the MPN domain. Residues H169, H171, and D182 each coordinate Zn(2+). The JAMM motif signature appears at 169 to 182 (HNHPSGVAEPSRAD).

The protein belongs to the UPF0758 family.

The polypeptide is UPF0758 protein ASA_4229 (Aeromonas salmonicida (strain A449)).